A 407-amino-acid polypeptide reads, in one-letter code: Peptidase T (407 aa).

H81 is a binding site for Zn(2+). The active site involves D83. D142 lines the Zn(2+) pocket. E176 (proton acceptor) is an active-site residue. E177, D199, and H381 together coordinate Zn(2+).

It belongs to the peptidase M20B family. The cofactor is Zn(2+).

It localises to the cytoplasm. It carries out the reaction Release of the N-terminal residue from a tripeptide.. In terms of biological role, cleaves the N-terminal amino acid of tripeptides. The chain is Peptidase T from Streptococcus pneumoniae (strain P1031).